The following is a 689-amino-acid chain: Glycine--tRNA ligase beta subunit (689 aa).

This sequence belongs to the class-II aminoacyl-tRNA synthetase family. As to quaternary structure, tetramer of two alpha and two beta subunits.

Its subcellular location is the cytoplasm. It carries out the reaction tRNA(Gly) + glycine + ATP = glycyl-tRNA(Gly) + AMP + diphosphate. The sequence is that of Glycine--tRNA ligase beta subunit from Hamiltonella defensa subsp. Acyrthosiphon pisum (strain 5AT).